Consider the following 107-residue polypeptide: Integration host factor subunit alpha (107 aa).

This sequence belongs to the bacterial histone-like protein family. As to quaternary structure, heterodimer of an alpha and a beta chain.

In terms of biological role, this protein is one of the two subunits of integration host factor, a specific DNA-binding protein that functions in genetic recombination as well as in transcriptional and translational control. The protein is Integration host factor subunit alpha of Brucella anthropi (strain ATCC 49188 / DSM 6882 / CCUG 24695 / JCM 21032 / LMG 3331 / NBRC 15819 / NCTC 12168 / Alc 37) (Ochrobactrum anthropi).